We begin with the raw amino-acid sequence, 360 residues long: Cuticle collagen dpy-2 (360 aa).

3 triple-helical region regions span residues 123-152 (GERGPSGDSGLPALPGAPGPDGAPGRPGTT), 174-230 (GPRG…KGRT), and 238-303 (GPPG…PGTC). Disordered regions lie at residues 127–158 (PSGDSGLPALPGAPGPDGAPGRPGTTPNASCI) and 174–360 (GPRG…IRKW). Residues 189–198 (GEYGIGGRPG) show a composition bias toward gly residues. The segment covering 242–258 (DSGLPGPWGPPGSAGMP) has biased composition (low complexity). A compositionally biased stretch (pro residues) spans 273 to 288 (PGPPGAPGPGGMPGPN).

The protein belongs to the cuticular collagen family. Collagen polypeptide chains are complexed within the cuticle by disulfide bonds and other types of covalent cross-links.

Functionally, nematode cuticles are composed largely of collagen-like proteins. The cuticle functions both as an exoskeleton and as a barrier to protect the worm from its environment. Mutations in dpy-2 affects the body shape. The sequence is that of Cuticle collagen dpy-2 (dpy-2) from Caenorhabditis elegans.